The sequence spans 474 residues: Dihydrolipoyl dehydrogenase (474 aa).

FAD-binding positions include Glu36 to Cys44, Lys53, and Gly119. A disulfide bridge links Cys44 with Cys49. Residues Gly184–Ile188, Glu207, and Ala275–Arg278 each bind NAD(+). Asp323 and Ala331 together coordinate FAD. His459 (proton acceptor) is an active-site residue.

It belongs to the class-I pyridine nucleotide-disulfide oxidoreductase family. As to quaternary structure, homodimer. FAD serves as cofactor.

The protein resides in the cell inner membrane. It catalyses the reaction N(6)-[(R)-dihydrolipoyl]-L-lysyl-[protein] + NAD(+) = N(6)-[(R)-lipoyl]-L-lysyl-[protein] + NADH + H(+). Functionally, lipoamide dehydrogenase is a component of the alpha-ketoacid dehydrogenase complexes. This is Dihydrolipoyl dehydrogenase (lpdA) from Synechocystis sp. (strain ATCC 27184 / PCC 6803 / Kazusa).